We begin with the raw amino-acid sequence, 254 residues long: MKDQPIGMFDSGVGGLSTLRDLRALLPHEDIIYYADTGNCPYGGRSHEEIVALSERITYILLERGVKLIVVACNTATLHAVDYLREHFSISFVGMEPGIKPAIAQTKTGVVGVMATQATVAGERFQRLIARYAGDVQVVPQACPGLVELIEAGELQSETTRDAVARYVAPLLKAGADTIVLGCTHYPFLRSLIADVAGPNVALLDTGAAVARQTQRLLAAADLLNPQTSQGSIEWLTSGDPAHFAKIRQCLEIE.

Substrate is bound by residues Asp10 to Ser11 and Tyr42 to Gly43. Cys73 acts as the Proton donor/acceptor in catalysis. Asn74 to Thr75 lines the substrate pocket. Cys183 serves as the catalytic Proton donor/acceptor. Thr184–His185 lines the substrate pocket.

The protein belongs to the aspartate/glutamate racemases family.

It catalyses the reaction L-glutamate = D-glutamate. The protein operates within cell wall biogenesis; peptidoglycan biosynthesis. Provides the (R)-glutamate required for cell wall biosynthesis. The chain is Glutamate racemase from Herpetosiphon aurantiacus (strain ATCC 23779 / DSM 785 / 114-95).